The primary structure comprises 206 residues: Xanthine phosphoribosyltransferase (206 aa).

Leu-28 and Asn-35 together coordinate xanthine. Residue 136 to 140 (ANGQA) coordinates 5-phospho-alpha-D-ribose 1-diphosphate. Position 164 (Lys-164) interacts with xanthine.

It belongs to the purine/pyrimidine phosphoribosyltransferase family. Xpt subfamily. As to quaternary structure, homodimer.

It localises to the cytoplasm. It carries out the reaction XMP + diphosphate = xanthine + 5-phospho-alpha-D-ribose 1-diphosphate. The protein operates within purine metabolism; XMP biosynthesis via salvage pathway; XMP from xanthine: step 1/1. Converts the preformed base xanthine, a product of nucleic acid breakdown, to xanthosine 5'-monophosphate (XMP), so it can be reused for RNA or DNA synthesis. The chain is Xanthine phosphoribosyltransferase from Oenococcus oeni (strain ATCC BAA-331 / PSU-1).